The sequence spans 373 residues: Schlafen-like protein 1 (373 aa).

Positions 1-67 (MAALFEENDS…ELSSEEVDIP (67 aa)) are disordered. Residues 247–373 (KAGAKIEFRT…NQVYRLESSV (127 aa)) form an SLFN-like fold region.

Belongs to the Schlafen family. In terms of assembly, component of the trimeric PUCH (precursor of 21U RNA 5'-end cleavage holoenzyme) complex; consisting of tofu-1, tofu-2 and either slfl-3 or slfl-4; which is required for processing of piRNA precursors. Within the complex, interacts (via N-terminus) with tofu-2 (via N-terminus); the interaction stabilizes tofu-2 and may form a functional nuclease. Within the complex, required for the interaction of tofu-2 (via N-terminus) with slfl-3 (via N-terminus). Interacts (via residues 82-172) with the PETISCO complex subunit tofu-6 (via residues 120-314); the interaction between the PETISCO and PUCH complex members enhances piRNA production in vivo. In terms of tissue distribution, expressed in the germline.

It is found in the cytoplasm. Component of the trimeric PUCH (precursor of 21U RNA 5'-end cleavage holoenzyme) complex, that acts as an endoribonuclease processing the 5'-end of precursor Piwi-interacting RNAs (piRNAs). The PUCH complex consists of tofu-1, tofu-2 and either slfl-3 or slfl-4, with tofu-2 exhibiting endoribonuclease activity. PUCH-mediated processing strictly requires a 7-methyl-G cap (m7 G-cap) and an uracil at position three (U3). PUCH also exhibits a strict bias for piRNA precursors with an A or G at position 1. Mature piRNA production is enhanced by the interaction of PUCH with the PETISCO complex, which is stabilizing piRNA precursors and allows their processing by PUCH. The protein is Schlafen-like protein 1 of Caenorhabditis elegans.